Consider the following 477-residue polypeptide: TNF receptor-associated factor family protein DDB_G0278133 (477 aa).

Residues 45-88 (CDICTLELFIESEPKALQCKEGHLACRRCWERYLSTNKQCMTCK) form an RING-type; degenerate zinc finger. 2 TRAF-type zinc fingers span residues 160–211 (NHYK…SSLS) and 212–267 (DHHK…SKMQ). Positions 271–326 (LEHSVTKLMNQNEIIKKDNQNLDQEKKIEEIKLKLNNLLNNYIQLKNEIAVLKQNS) form a coiled coil. In terms of domain architecture, MATH spans 331–463 (VYSNKWIIPE…FLNEKGELEI (133 aa)).

It belongs to the TNF receptor-associated factor family. A subfamily.

The protein localises to the cytoplasm. Its function is as follows. Probable adapter protein and signal transducer that links members of the tumor necrosis factor receptor family to different signaling pathways by association with the receptor cytoplasmic domain and kinases. The sequence is that of TNF receptor-associated factor family protein DDB_G0278133 from Dictyostelium discoideum (Social amoeba).